The sequence spans 460 residues: Argininosuccinate lyase (460 aa).

The protein belongs to the lyase 1 family. Argininosuccinate lyase subfamily.

Its subcellular location is the cytoplasm. The catalysed reaction is 2-(N(omega)-L-arginino)succinate = fumarate + L-arginine. It participates in amino-acid biosynthesis; L-arginine biosynthesis; L-arginine from L-ornithine and carbamoyl phosphate: step 3/3. In Rhodopirellula baltica (strain DSM 10527 / NCIMB 13988 / SH1), this protein is Argininosuccinate lyase.